The sequence spans 878 residues: Probable receptor-like protein kinase At4g39110 (878 aa).

Positions 1–43 (MEIRKKPNIFTVLVIDFSSKPSMALLLAILLFLSGPSASAVAA) are cleaved as a signal peptide. The Extracellular portion of the chain corresponds to 44 to 440 (AAVGPATGFK…GRTTGMGKHG (397 aa)). Asparagine 170, asparagine 183, asparagine 254, asparagine 317, and asparagine 382 each carry an N-linked (GlcNAc...) asparagine glycan. A helical transmembrane segment spans residues 441-461 (MVATAGFVMMFGAFIGLGAMV). The Cytoplasmic segment spans residues 462–878 (YKWKKRPQDW…FTQFANLNGR (417 aa)). Residues 526–798 (FEASQIIGVG…GDVLWNLEYA (273 aa)) enclose the Protein kinase domain. ATP contacts are provided by residues 532–540 (IGVGGFGNV) and lysine 554. Residue aspartate 650 is the Proton acceptor of the active site. Positions 808–844 (GKAEETENAKPDVVTPGSVPVSDPSPITPSVTTNEAA) are disordered.

Belongs to the protein kinase superfamily. Ser/Thr protein kinase family.

The protein resides in the membrane. The protein is Probable receptor-like protein kinase At4g39110 of Arabidopsis thaliana (Mouse-ear cress).